The following is a 358-amino-acid chain: 3-isopropylmalate dehydrogenase (358 aa).

77–90 contacts NAD(+); the sequence is GEKWDSLPRELRPE. The substrate site is built by Arg97, Arg107, Arg135, and Asp220. Residues Asp220, Asp244, and Asp248 each coordinate Mg(2+). 277–289 contacts NAD(+); sequence GSAPDIAGQGIAN.

Belongs to the isocitrate and isopropylmalate dehydrogenases family. LeuB type 1 subfamily. As to quaternary structure, homodimer. Requires Mg(2+) as cofactor. Mn(2+) is required as a cofactor.

It localises to the cytoplasm. It carries out the reaction (2R,3S)-3-isopropylmalate + NAD(+) = 4-methyl-2-oxopentanoate + CO2 + NADH. It functions in the pathway amino-acid biosynthesis; L-leucine biosynthesis; L-leucine from 3-methyl-2-oxobutanoate: step 3/4. Functionally, catalyzes the oxidation of 3-carboxy-2-hydroxy-4-methylpentanoate (3-isopropylmalate) to 3-carboxy-4-methyl-2-oxopentanoate. The product decarboxylates to 4-methyl-2 oxopentanoate. The sequence is that of 3-isopropylmalate dehydrogenase from Wolinella succinogenes (strain ATCC 29543 / DSM 1740 / CCUG 13145 / JCM 31913 / LMG 7466 / NCTC 11488 / FDC 602W) (Vibrio succinogenes).